Here is an 848-residue protein sequence, read N- to C-terminus: Adenylate cyclase (848 aa).

The interval 1–535 (MYLYIETLKQ…DVSHHFPLRL (535 aa)) is catalytic. Residues 541–848 (KALYSPCEIR…DAPLLQQYFS (308 aa)) are regulatory. At His609 the chain carries Phosphohistidine; by CRR.

It belongs to the adenylyl cyclase class-1 family.

It localises to the cytoplasm. It carries out the reaction ATP = 3',5'-cyclic AMP + diphosphate. In Salmonella typhi, this protein is Adenylate cyclase (cyaA).